The primary structure comprises 331 residues: Phospholipase A2 inhibitor (331 aa).

The signal sequence occupies residues 1–23 (MKSSVPSLLIACLVMSLNSYTQQ). The N-linked (GlcNAc...) asparagine glycan is linked to N35. LRR repeat units follow at residues 78 to 101 (LPNLQELHLSNNRLKTLPSGLFRN), 103 to 125 (PQLHTLDLSTNHLEDLPPEIFTN), 127 to 149 (SSLILLPLSENQLAELHPSWFQT), 150 to 173 (LGELRILGLDHNQVKEIPISCFDK), 175 to 197 (KKLTSLDLSFNLLRRLAPEMFSG), 199 to 221 (DNLEKLILESNPIQCIVGRTFHW), 223 to 244 (PKLTVLSLKNSSLTNIMGFFQP), and 245 to 268 (LEQLELLDLSDNELTTMEPPVYKT). The N-linked (GlcNAc...) asparagine glycan is linked to N125. N232 carries N-linked (GlcNAc...) asparagine glycosylation. N271 carries N-linked (GlcNAc...) asparagine glycosylation. Residues 279–330 (NPWACDCRLDNLLTWVNEHNIHLYSKEEIVCASPKHFKGECATSLHKSQICP) enclose the LRRCT domain.

As to quaternary structure, homotrimer.

The protein localises to the secreted. Functionally, inhibits the enzymatic activity of the basic phospholipase A2 (PLA2). This Gloydius brevicaudus siniticus (Chinese mamushi) protein is Phospholipase A2 inhibitor.